Here is a 121-residue protein sequence, read N- to C-terminus: Ribosome-binding factor A (121 aa).

Belongs to the RbfA family. In terms of assembly, monomer. Binds 30S ribosomal subunits, but not 50S ribosomal subunits or 70S ribosomes.

Its subcellular location is the cytoplasm. In terms of biological role, one of several proteins that assist in the late maturation steps of the functional core of the 30S ribosomal subunit. Associates with free 30S ribosomal subunits (but not with 30S subunits that are part of 70S ribosomes or polysomes). Required for efficient processing of 16S rRNA. May interact with the 5'-terminal helix region of 16S rRNA. This chain is Ribosome-binding factor A, found in Clostridium tetani (strain Massachusetts / E88).